Here is a 214-residue protein sequence, read N- to C-terminus: Pyridoxine/pyridoxamine 5'-phosphate oxidase (214 aa).

Substrate contacts are provided by residues 8–11 (RTNY) and Lys-66. FMN is bound by residues 61-66 (RIVLIK), 76-77 (FT), Arg-82, Lys-83, and Gln-105. Residues Tyr-123, Arg-127, and Ser-131 each contribute to the substrate site. FMN contacts are provided by residues 140–141 (QS) and Trp-184. A substrate-binding site is contributed by 190–192 (RLH). Arg-194 contacts FMN.

It belongs to the pyridoxamine 5'-phosphate oxidase family. In terms of assembly, homodimer. It depends on FMN as a cofactor.

The enzyme catalyses pyridoxamine 5'-phosphate + O2 + H2O = pyridoxal 5'-phosphate + H2O2 + NH4(+). The catalysed reaction is pyridoxine 5'-phosphate + O2 = pyridoxal 5'-phosphate + H2O2. Its pathway is cofactor metabolism; pyridoxal 5'-phosphate salvage; pyridoxal 5'-phosphate from pyridoxamine 5'-phosphate: step 1/1. It participates in cofactor metabolism; pyridoxal 5'-phosphate salvage; pyridoxal 5'-phosphate from pyridoxine 5'-phosphate: step 1/1. Catalyzes the oxidation of either pyridoxine 5'-phosphate (PNP) or pyridoxamine 5'-phosphate (PMP) into pyridoxal 5'-phosphate (PLP). The polypeptide is Pyridoxine/pyridoxamine 5'-phosphate oxidase (Burkholderia pseudomallei (strain 1106a)).